Here is a 127-residue protein sequence, read N- to C-terminus: UPF0212 protein VNG_1264C (127 aa).

Belongs to the UPF0212 family.

The polypeptide is UPF0212 protein VNG_1264C (Halobacterium salinarum (strain ATCC 700922 / JCM 11081 / NRC-1) (Halobacterium halobium)).